The primary structure comprises 314 residues: R2-like ligand binding oxidase (314 aa).

Mn(2+) is bound by residues Glu-68, Glu-101, and His-104. The segment at residues 71-162 is a cross-link (3-(O4'-tyrosyl)-valine (Val-Tyr)); it reads VTEDIQPFMS…AAQVRASVTY (92 aa). Glu-101 is a binding site for Fe cation. Positions 167, 202, and 205 each coordinate Fe cation.

It belongs to the ribonucleoside diphosphate reductase small chain family. R2-like ligand binding oxidase subfamily. Homodimer. Fe cation serves as cofactor. Mn(2+) is required as a cofactor.

Probable oxidase that might be involved in lipid metabolism. The sequence is that of R2-like ligand binding oxidase from Mycobacterium bovis (strain ATCC BAA-935 / AF2122/97).